The chain runs to 299 residues: MSSIKIECVVSETYKIGESPVWEEKEGTLLFVDITGQKVCRWDPSTKKVQSVSVEAPIGSVALRKSGGYVLAMGNTFSALNWEDQSVTTLARVDEDKPNNRFNDGKVDPEGRFLAGTMSQEIRPAVVERNQGSLFTLYPDHSVVKHFDMVDISNGLDWSLDHKTLYYIDSLSFKVDALDYDMKTGKSSNRRTLYKLQQDEGIPDGMCIDAEGKLWVACYNGGRVIRIDPETGKQIQTVKLPIDKTTSCCFGGPDYSEMYVTSACDGMDEDWKKRQPQSGGIYKITGLGVKGIAPTAFAG.

Glu-18 provides a ligand contact to a divalent metal cation. The substrate site is built by Arg-101, Asn-103, and Glu-121. Residues Asn-154 and Asp-204 each contribute to the a divalent metal cation site. Asp-204 (proton donor/acceptor) is an active-site residue.

Belongs to the SMP-30/CGR1 family. The cofactor is Zn(2+). Requires Mn(2+) as cofactor. It depends on Ca(2+) as a cofactor. Mg(2+) serves as cofactor. Expressed in the liver, and in the pronephros from the late tadpole stage.

The protein localises to the cytoplasm. It carries out the reaction D-glucono-1,5-lactone + H2O = D-gluconate + H(+). Its pathway is cofactor biosynthesis; L-ascorbate biosynthesis via UDP-alpha-D-glucuronate pathway; L-ascorbate from UDP-alpha-D-glucuronate: step 3/4. Gluconolactonase with low activity towards other sugar lactones, including gulonolactone and galactonolactone. Catalyzes a key step in ascorbic acid (vitamin C) biosynthesis. Can also hydrolyze diisopropyl phosphorofluoridate and phenylacetate (in vitro). Calcium-binding protein. Modulates Ca(2+) signaling, and Ca(2+)-dependent cellular processes and enzyme activities. This chain is Regucalcin, found in Xenopus laevis (African clawed frog).